The chain runs to 316 residues: Polyprenyl transferase prhE (316 aa).

The next 9 helical transmembrane spans lie at 45 to 65, 69 to 89, 114 to 134, 135 to 155, 163 to 183, 188 to 208, 231 to 253, 257 to 276, and 296 to 316; these read VVGV…TFLL, VILS…NDLI, GAAL…LLLP, SQCA…PFGK, LILT…DMSP, IPTL…DIVY, ITDQ…GGIL, GFPF…LRFL, and SCLL…CVRL.

The protein belongs to the UbiA prenyltransferase family. Requires Mg(2+) as cofactor.

The protein resides in the membrane. The enzyme catalyses 3,5-dimethylorsellinate + (2E,6E)-farnesyl diphosphate = (3R)-3-farnesyl-6-hydroxy-2,3,5-trimethyl-4-oxocyclohexa-1,5-diene-1-carboxylate + diphosphate + H(+). It participates in secondary metabolite biosynthesis; terpenoid biosynthesis. Functionally, polyprenyl transferase; part of the gene cluster that mediates the biosynthesis of paraherquonin, a meroterpenoid with a unique, highly congested hexacyclic molecular architecture. The first step of the pathway is the synthesis of 3,5-dimethylorsellinic acid (DMOA) by the polyketide synthase prhL. Synthesis of DMOA is followed by farnesylation by the prenyltransferase prhE, methylesterification by the methyl-transferase prhM, epoxidation of the prenyl chain by the flavin-dependent monooxygenase prhF, and cyclization of the farnesyl moiety by the terpene cyclase prhH, to yield the tetracyclic intermediate, protoaustinoid A. The short chain dehydrogenase prhI then oxidizes the C-3 alcohol group of the terpene cyclase product to transform protoaustinoid A into protoaustinoid B. The FAD-binding monooxygenase prhJ catalyzes the oxidation of protoaustinoid B into preaustinoid A which is further oxidized into preaustinoid A1 by FAD-binding monooxygenase phrK. Finally, prhA leads to berkeleydione via the berkeleyone B intermediate. PrhA is a multifunctional dioxygenase that first desaturates at C5-C6 to form berkeleyone B, followed by rearrangement of the A/B-ring to form the cycloheptadiene moiety in berkeleydione. Berkeleydione serves as the key intermediate for the biosynthesis of paraherquonin as well as many other meroterpenoids. The cytochrome P450 monooxygenases prhB, prhD, and prhN, as well as the isomerase prhC, are probably involved in the late stage of paraherquonin biosynthesis, after the production of berkeleydione. Especially prhC might be a multifunctional enzyme that catalyzes the D-ring expansion via intramolecular methoxy rearrangement, as well as the hydrolysis of the expanded D-ring. The polypeptide is Polyprenyl transferase prhE (Penicillium brasilianum).